A 641-amino-acid polypeptide reads, in one-letter code: Calpain-6 (641 aa).

The 318-residue stretch at 26–343 (LFCDPTFLPE…FHKLNVCRNV (318 aa)) folds into the Calpain catalytic domain. The segment at 344–495 (NNPIFGRKEL…IFSEVPVQLR (152 aa)) is domain III. A C2 domain is found at 498–621 (TLDMPKMSCW…YLRKKGGPTA (124 aa)).

This sequence belongs to the peptidase C2 family. As to quaternary structure, interacts (via domain III) with microtubules. Interacts (via domain II) with ARHGEF2 (via the N-terminal zinc finger). Expressed only in placenta.

It localises to the cytoplasm. Its subcellular location is the perinuclear region. It is found in the cytoskeleton. The protein resides in the spindle. In terms of biological role, microtubule-stabilizing protein that may be involved in the regulation of microtubule dynamics and cytoskeletal organization. May act as a regulator of RAC1 activity through interaction with ARHGEF2 to control lamellipodial formation and cell mobility. Does not seem to have protease activity as it has lost the active site residues. This Homo sapiens (Human) protein is Calpain-6 (CAPN6).